Reading from the N-terminus, the 1238-residue chain is DNA-directed RNA polymerase subunit beta (1238 aa).

It belongs to the RNA polymerase beta chain family. In terms of assembly, the RNAP catalytic core consists of 2 alpha, 1 beta, 1 beta' and 1 omega subunit. When a sigma factor is associated with the core the holoenzyme is formed, which can initiate transcription.

The catalysed reaction is RNA(n) + a ribonucleoside 5'-triphosphate = RNA(n+1) + diphosphate. Its function is as follows. DNA-dependent RNA polymerase catalyzes the transcription of DNA into RNA using the four ribonucleoside triphosphates as substrates. The sequence is that of DNA-directed RNA polymerase subunit beta from Clostridioides difficile (strain 630) (Peptoclostridium difficile).